The following is a 358-amino-acid chain: Chitin synthase export chaperone (358 aa).

7 consecutive transmembrane segments (helical) span residues 49–69 (IIFQ…TVVM), 88–108 (FFYL…GVIP), 117–137 (FVAV…INGF), 159–179 (FVAF…WAGL), 185–205 (VGIF…YVVM), 220–240 (LGDI…LYAF), and 250–270 (HYLD…MMVY). Residues 321–358 (ASGPGTGSGASASGYEGGHHRRESHGYTPSPNRQSLRY) are disordered. Over residues 347 to 358 (YTPSPNRQSLRY) the composition is skewed to polar residues.

It belongs to the CHS7 family. As to quaternary structure, interacts with chs-3.

The protein localises to the endoplasmic reticulum membrane. In terms of biological role, chaperone required for the export of the chitin synthase chs-3 from the endoplasmic reticulum. The chain is Chitin synthase export chaperone (csc-1) from Neurospora crassa (strain ATCC 24698 / 74-OR23-1A / CBS 708.71 / DSM 1257 / FGSC 987).